The primary structure comprises 471 residues: Monocarboxylate transporter 11 (471 aa).

Over residues 1–13 (MPAPQRKHRRGGF) the composition is skewed to basic residues. The segment at 1–31 (MPAPQRKHRRGGFSHRCFPTPQTAMTPQPAG) is disordered. Residues 1–35 (MPAPQRKHRRGGFSHRCFPTPQTAMTPQPAGPPDG) are Cytoplasmic-facing. The span at 19 to 28 (PTPQTAMTPQ) shows a compositional bias: low complexity. The next 12 membrane-spanning stretches (helical) occupy residues 36–56 (GWGW…YGLL), 78–98 (AWIS…GSAL), 106–126 (PVVM…AFAS), 131–151 (LYLG…APAL), 163–183 (VLAV…LAPA), 198–218 (LLLG…LPLV), 243–263 (AFSI…VPYV), 273–293 (GLGG…DAGA), 312–332 (LAVF…VPVV), 333–353 (GGEE…GLSA), 367–389 (LVGV…LGGL), and 407–427 (ASFL…IGLP). Residues 428 to 471 (RALPSCGPASPPATPPPETGELLPAPQAVLLSPGGPGSTLDTTC) lie on the Cytoplasmic side of the membrane.

It belongs to the major facilitator superfamily. Monocarboxylate porter (TC 2.A.1.13) family. As to quaternary structure, interacts with isoform 2 of BSG. Expressed in liver, salivary gland and thyroid.

Its subcellular location is the endoplasmic reticulum membrane. It localises to the cell membrane. It carries out the reaction pyruvate(out) + H(+)(out) = pyruvate(in) + H(+)(in). Proton-linked monocarboxylate transporter. It catalyzes the transport of pyruvate across the plasma membrane. Probably involved in hepatic lipid metabolism: overexpression results in an increase of triacylglycerol(TAG) levels, small increases in intracellular diacylglycerols and decreases in lysophosphatidylcholine, cholesterol ester and sphingomyelin lipids. In Homo sapiens (Human), this protein is Monocarboxylate transporter 11 (SLC16A11).